Consider the following 311-residue polypeptide: Olfactory receptor 5L1 (311 aa).

Residues 1–25 lie on the Extracellular side of the membrane; the sequence is MGKENCTTVAEFILLGLSDVPELRV. Asn-5 carries an N-linked (GlcNAc...) asparagine glycan. Residues 26-46 traverse the membrane as a helical segment; that stretch reads CLFLLFLLIYGVTLLANLGMI. The Cytoplasmic segment spans residues 47–54; it reads ALIQVSSR. A helical transmembrane segment spans residues 55–75; sequence LHTPMYFFLSHLSSVDFCYSS. The Extracellular portion of the chain corresponds to 76–99; it reads IIVPKMLANIFNKDKAISFLGCMV. Cys-97 and Cys-189 form a disulfide bridge. The chain crosses the membrane as a helical span at residues 100–120; it reads QFYLFCTCVVTEVFLLAVMAY. Residues 121–139 lie on the Cytoplasmic side of the membrane; it reads DRFVAICNPLLYTVTMSWK. A helical membrane pass occupies residues 140 to 160; it reads VRVELASCCYFCGTVCSLIHL. The Extracellular portion of the chain corresponds to 161–196; sequence CLALRIPFYRSNVINHFFCDLPPVLSLACSDITVNE. A glycan (N-linked (GlcNAc...) asparagine) is linked at Asn-195. Residues 197–217 form a helical membrane-spanning segment; the sequence is TLLFLVATLNESVTIMIILTS. Over 218–237 the chain is Cytoplasmic; sequence YLLILTTILKMGSAEGRHKA. A helical transmembrane segment spans residues 238–258; that stretch reads FSTCASHLTAITVFHGTVLSI. The Extracellular portion of the chain corresponds to 259–271; sequence YCRPSSGNSGDAD. Residues 272–292 traverse the membrane as a helical segment; it reads KVATVFYTVVIPMLNSVIYSL. Residues 293 to 311 lie on the Cytoplasmic side of the membrane; the sequence is RNKDVKEALRKVMGSKIHS.

This sequence belongs to the G-protein coupled receptor 1 family.

The protein resides in the cell membrane. Its function is as follows. Odorant receptor. In Homo sapiens (Human), this protein is Olfactory receptor 5L1 (OR5L1).